Here is a 356-residue protein sequence, read N- to C-terminus: Probable neutral protease 2 homolog TRV_06370 (356 aa).

The signal sequence occupies residues 1–17; the sequence is MQFTALLAALGAPLALA. Positions 18–183 are excised as a propeptide; the sequence is ASIPAAAHNH…DDSTGVIDKR (166 aa). 2 disulfide bridges follow: cysteine 191-cysteine 262 and cysteine 269-cysteine 287. Zn(2+) is bound at residue histidine 311. Glutamate 312 is an active-site residue. Positions 315 and 326 each coordinate Zn(2+).

This sequence belongs to the peptidase M35 family. The cofactor is Zn(2+).

It localises to the secreted. The enzyme catalyses Preferential cleavage of bonds with hydrophobic residues in P1'. Also 3-Asn-|-Gln-4 and 8-Gly-|-Ser-9 bonds in insulin B chain.. Functionally, probable secreted metalloprotease that shows high activities on basic nuclear substrates such as histone and protamine. May be involved in virulence. The polypeptide is Probable neutral protease 2 homolog TRV_06370 (Trichophyton verrucosum (strain HKI 0517)).